Here is a 156-residue protein sequence, read N- to C-terminus: UPF0460 protein in nifX 3'region (156 aa).

The protein belongs to the UPF0460 family.

The polypeptide is UPF0460 protein in nifX 3'region (Rhodobacter capsulatus (Rhodopseudomonas capsulata)).